The following is a 618-amino-acid chain: Paraneoplastic antigen-like protein 5 (618 aa).

Residues 390–399 (AGEEGQRKES) show a composition bias toward basic and acidic residues. 3 disordered regions span residues 390–409 (AGEEGQRKESGFWAESEPDE), 451–475 (RDTLTKSWGSPDKGTGDMSVAEGQQ), and 519–549 (SMITRPQGNPDRSWDTSGSQDGEDGCSELRM).

Belongs to the PNMA family. In terms of tissue distribution, restricted to testis, where expression is low. Not detected in the brain.

Its subcellular location is the nucleus. The chain is Paraneoplastic antigen-like protein 5 (Pnma5) from Mus musculus (Mouse).